A 448-amino-acid chain; its full sequence is DNA primase DnaG (448 aa).

The Toprim domain maps to 186 to 260; the sequence is DSIIVVEGRN…EADFVARAPP (75 aa). Mg(2+)-binding residues include E192, D234, and D236. The disordered stretch occupies residues 318–340; sequence AEVIEEPPEQPPKNEEIREEQSQ. Basic and acidic residues predominate over residues 329–338; the sequence is PKNEEIREEQ.

This sequence belongs to the archaeal DnaG primase family. Forms a ternary complex with MCM helicase and DNA. Component of the archaeal exosome complex. The cofactor is Mg(2+).

It carries out the reaction ssDNA + n NTP = ssDNA/pppN(pN)n-1 hybrid + (n-1) diphosphate.. RNA polymerase that catalyzes the synthesis of short RNA molecules used as primers for DNA polymerase during DNA replication. Also part of the exosome, which is a complex involved in RNA degradation. Acts as a poly(A)-binding protein that enhances the interaction between heteromeric, adenine-rich transcripts and the exosome. This chain is DNA primase DnaG, found in Thermoplasma acidophilum (strain ATCC 25905 / DSM 1728 / JCM 9062 / NBRC 15155 / AMRC-C165).